Reading from the N-terminus, the 389-residue chain is D-alanine--D-alanine ligase (389 aa).

The segment covering 1–12 (MSTENLPQNPEQ) has biased composition (polar residues). Residues 1–22 (MSTENLPQNPEQSPRRPPRKPR) form a disordered region. Residues 169-379 (KAVFTSYGLK…YPELVDRLVQ (211 aa)) form the ATP-grasp domain. 205 to 260 (AGEHGWPLFVKPARAGSSIGITKVDDLAGLDEAIEEARRHDPKILVEAALRGREIE) lines the ATP pocket. Positions 333, 346, and 348 each coordinate Mg(2+).

The protein belongs to the D-alanine--D-alanine ligase family. The cofactor is Mg(2+). Requires Mn(2+) as cofactor.

It is found in the cytoplasm. It carries out the reaction 2 D-alanine + ATP = D-alanyl-D-alanine + ADP + phosphate + H(+). It participates in cell wall biogenesis; peptidoglycan biosynthesis. In terms of biological role, cell wall formation. In Streptomyces coelicolor (strain ATCC BAA-471 / A3(2) / M145), this protein is D-alanine--D-alanine ligase (ddl).